Here is a 468-residue protein sequence, read N- to C-terminus: Cyclin-T1.1 (468 aa).

A compositionally biased stretch (basic and acidic residues) spans 336–354 (KERGVEEERRKRERDRMAG). The interval 336–468 (KERGVEEERR…DMDLEDGELE (133 aa)) is disordered. A compositionally biased stretch (pro residues) spans 387–402 (APPPIPPQLNFPPPPI). Residues 458–468 (SDMDLEDGELE) are compositionally biased toward acidic residues.

It belongs to the cyclin family. Cyclin C subfamily.

Regulatory subunit of the cyclin-dependent kinase pair (CDK9/cyclin T) complex, also called positive transcription elongation factor B (P-TEFb), which is proposed to facilitate the transition from abortive to production elongation by phosphorylating the CTD (carboxy-terminal domain) of the large subunit of RNA polymerase II (RNAP II). This chain is Cyclin-T1.1, found in Caenorhabditis elegans.